The primary structure comprises 171 residues: Prolyl-tRNA synthetase associated domain-containing protein 1 (171 aa).

Belongs to the PRORSD1 family.

The protein is Prolyl-tRNA synthetase associated domain-containing protein 1 (PRORSD1) of Bos taurus (Bovine).